Here is a 719-residue protein sequence, read N- to C-terminus: Polyribonucleotide nucleotidyltransferase (719 aa).

Mg(2+)-binding residues include Asp-507 and Asp-513. Residues 573 to 633 (PKLELFSVDP…EQIKAAKDYI (61 aa)) enclose the KH domain. An S1 motif domain is found at 658 to 719 (GQEFQGIVKK…NGKISVDLCE (62 aa)).

The protein belongs to the polyribonucleotide nucleotidyltransferase family. Mg(2+) is required as a cofactor.

It localises to the cytoplasm. The enzyme catalyses RNA(n+1) + phosphate = RNA(n) + a ribonucleoside 5'-diphosphate. Functionally, involved in mRNA degradation. Catalyzes the phosphorolysis of single-stranded polyribonucleotides processively in the 3'- to 5'-direction. In Campylobacter jejuni (strain RM1221), this protein is Polyribonucleotide nucleotidyltransferase.